A 750-amino-acid polypeptide reads, in one-letter code: Rho GTPase-activating protein 9 (750 aa).

Positions 22-88 (PRGSQLCALY…PAAYMIEESI (67 aa)) constitute an SH3 domain. Disordered regions lie at residues 120-187 (ALPS…LMSE) and 242-319 (WKPP…LLDD). Over residues 163-180 (RSLSQEDLPSEASASTAG) the composition is skewed to polar residues. The 35-residue stretch at 213–247 (LQRLDAWEQHLDPNSGRCFYINSLTGCKSWKPPRR) folds into the WW domain. 2 stretches are compositionally biased toward polar residues: residues 251–270 (ETNP…NDVL) and 291–300 (GSLSLSQRTS). The segment covering 301–317 (QLDPPALQAPRPLPQLL) has biased composition (low complexity). Residues 322–435 (EVEKSGLLNM…WHRALRTVIE (114 aa)) enclose the PH domain. 3 lipid binding regions span residues 342–345 (RKNW), 397–399 (SSR), and 432–669 (TVIE…CLSQ). Residues 446–462 (EAPTGRDQGSGDRENPL) are compositionally biased toward basic and acidic residues. Residues 446-488 (EAPTGRDQGSGDRENPLELRLSGSGPAELSAGEDEEEESELVS) form a disordered region. At serine 475 the chain carries Phosphoserine. Positions 476 to 485 (AGEDEEEESE) are enriched in acidic residues. Serine 500 bears the Phosphoserine mark. A Rho-GAP domain is found at 542–749 (CQLESLCQRE…LMLTNFTSLF (208 aa)).

Interacts with FASLG. Predominantly expressed in peripheral blood leukocytes, spleen, and thymus.

Functionally, GTPase activator for the Rho-type GTPases by converting them to an inactive GDP-bound state. Has a substantial GAP activity toward CDC42 and RAC1 and less toward RHOA. Has a role in regulating adhesion of hematopoietic cells to the extracellular matrix. Binds phosphoinositides, and has the highest affinity for phosphatidylinositol 3,4,5-trisphosphate, followed by phosphatidylinositol 3,4-bisphosphate and phosphatidylinositol 4,5-bisphosphate. The sequence is that of Rho GTPase-activating protein 9 (ARHGAP9) from Homo sapiens (Human).